A 166-amino-acid polypeptide reads, in one-letter code: Protein-export protein SecB (166 aa).

This sequence belongs to the SecB family. Homotetramer, a dimer of dimers. One homotetramer interacts with 1 SecA dimer.

It localises to the cytoplasm. In terms of biological role, one of the proteins required for the normal export of preproteins out of the cell cytoplasm. It is a molecular chaperone that binds to a subset of precursor proteins, maintaining them in a translocation-competent state. It also specifically binds to its receptor SecA. This is Protein-export protein SecB from Cereibacter sphaeroides (strain ATCC 17025 / ATH 2.4.3) (Rhodobacter sphaeroides).